The chain runs to 497 residues: Probable malate:quinone oxidoreductase (497 aa).

This sequence belongs to the MQO family. FAD is required as a cofactor.

The enzyme catalyses (S)-malate + a quinone = a quinol + oxaloacetate. The protein operates within carbohydrate metabolism; tricarboxylic acid cycle; oxaloacetate from (S)-malate (quinone route): step 1/1. This Hahella chejuensis (strain KCTC 2396) protein is Probable malate:quinone oxidoreductase.